The chain runs to 298 residues: ATP synthase gamma chain (298 aa).

The protein belongs to the ATPase gamma chain family. As to quaternary structure, F-type ATPases have 2 components, CF(1) - the catalytic core - and CF(0) - the membrane proton channel. CF(1) has five subunits: alpha(3), beta(3), gamma(1), delta(1), epsilon(1). CF(0) has three main subunits: a, b and c.

It localises to the cell inner membrane. In terms of biological role, produces ATP from ADP in the presence of a proton gradient across the membrane. The gamma chain is believed to be important in regulating ATPase activity and the flow of protons through the CF(0) complex. This is ATP synthase gamma chain from Acidithiobacillus ferridurans.